Consider the following 429-residue polypeptide: Enolase (429 aa).

Position 163 (Gln-163) interacts with (2R)-2-phosphoglycerate. The Proton donor role is filled by Glu-205. The Mg(2+) site is built by Asp-242, Glu-287, and Asp-314. (2R)-2-phosphoglycerate-binding residues include Lys-339, Arg-368, Ser-369, and Lys-390. Catalysis depends on Lys-339, which acts as the Proton acceptor.

Belongs to the enolase family. Mg(2+) serves as cofactor.

Its subcellular location is the cytoplasm. It localises to the secreted. The protein localises to the cell surface. It carries out the reaction (2R)-2-phosphoglycerate = phosphoenolpyruvate + H2O. Its pathway is carbohydrate degradation; glycolysis; pyruvate from D-glyceraldehyde 3-phosphate: step 4/5. In terms of biological role, catalyzes the reversible conversion of 2-phosphoglycerate (2-PG) into phosphoenolpyruvate (PEP). It is essential for the degradation of carbohydrates via glycolysis. This chain is Enolase, found in Cupriavidus pinatubonensis (strain JMP 134 / LMG 1197) (Cupriavidus necator (strain JMP 134)).